The following is a 203-amino-acid chain: Outer-membrane lipoprotein carrier protein (203 aa).

Positions 1–21 are cleaved as a signal peptide; that stretch reads MKKLLVACCLLSGFASTSVLA.

The protein belongs to the LolA family. In terms of assembly, monomer.

The protein localises to the periplasm. Participates in the translocation of lipoproteins from the inner membrane to the outer membrane. Only forms a complex with a lipoprotein if the residue after the N-terminal Cys is not an aspartate (The Asp acts as a targeting signal to indicate that the lipoprotein should stay in the inner membrane). This is Outer-membrane lipoprotein carrier protein from Serratia proteamaculans (strain 568).